Consider the following 161-residue polypeptide: Dihydrofolate reductase (161 aa).

In terms of domain architecture, DHFR spans 2-157 (TLSIIVAHDK…IPHTFLHLVR (156 aa)). 6–8 (IVA) lines the substrate pocket. NADP(+) contacts are provided by residues 7–8 (VA) and 15–20 (IGYQNQ). Residue Asp-28 participates in substrate binding. Residue 44–47 (GRKT) participates in NADP(+) binding. Position 58 (Arg-58) interacts with substrate. Residues 63–66 (LTNQ) and 93–98 (FGGQTL) each bind NADP(+). A substrate-binding site is contributed by Thr-112.

Belongs to the dihydrofolate reductase family.

It carries out the reaction (6S)-5,6,7,8-tetrahydrofolate + NADP(+) = 7,8-dihydrofolate + NADPH + H(+). Its pathway is cofactor biosynthesis; tetrahydrofolate biosynthesis; 5,6,7,8-tetrahydrofolate from 7,8-dihydrofolate: step 1/1. In terms of biological role, key enzyme in folate metabolism. Catalyzes an essential reaction for de novo glycine and purine synthesis, and for DNA precursor synthesis. This chain is Dihydrofolate reductase (folA), found in Staphylococcus epidermidis.